A 119-amino-acid polypeptide reads, in one-letter code: Large ribosomal subunit protein uL22c (119 aa).

This sequence belongs to the universal ribosomal protein uL22 family. Part of the 50S ribosomal subunit.

It is found in the plastid. Its subcellular location is the chloroplast. In terms of biological role, this protein binds specifically to 23S rRNA. Functionally, the globular domain of the protein is located near the polypeptide exit tunnel on the outside of the subunit, while an extended beta-hairpin is found that lines the wall of the exit tunnel in the center of the 70S ribosome. This Marchantia polymorpha (Common liverwort) protein is Large ribosomal subunit protein uL22c (rpl22).